A 593-amino-acid chain; its full sequence is MFYYPNVLQRHTGCFATIWLAATRGSRLVKREYLKVNVVKTCEEILNYVLVRVQPPMPGLPRPRFSLYLSAQLQIGVIRVYFQQCQYLVEDIQHILEHLHRAQLRIRIDMEEADLPSLLLPNCLAMMETLEDAPEPFFGTMSVDPTLPSPFDIPQIRHLLEAATPEKIREETLPEATPEPRKPDRTLAMVQSPEVITLQEAEPIRMLRIEGEQDLPEISRGDLDLLIAEEDDAILLEERQRGRLLRQRRASPPLDESKEEPRALEGDGLVSSLSPPAPAQVEGIREPLPDQAFPPEVQKMPGWEPGVLLTEVTPPQELRLPAPPSIEKRPPSPQRPPRRRRRGRQLLFWDKETQISREKFEEQLQTGAHCCEYPVVQPPKRKLMSPAELFRTPTLSGWLSPELLALWTHCAQVPPRMLRQRPQLETEETVEEERVADKEERRKTEALSEIEVLREAQEPSGPLMLSSELSLEVAEEEKSRTSFIPPEERWAWIEERQPEPPALPMLPELPEVPMEMPPGPELLSSEAVLRAVALELQANREPDFSSLVPPLSSRKLASRVFYLLLVLSAQKILLVDQQKPYGRLLIRLGPKFP.

Phosphoserine is present on S149. Position 164 is a phosphothreonine (T164). Phosphoserine is present on S192. Disordered regions lie at residues 247 to 282, 317 to 344, and 422 to 444; these read QRRA…AQVE, ELRL…RRGR, and PQLE…RRKT. Residues 255 to 265 are compositionally biased toward basic and acidic residues; the sequence is DESKEEPRALE. A compositionally biased stretch (basic and acidic residues) spans 432–444; sequence EERVADKEERRKT.

Belongs to the rad21 family. Interacts (phosphorylated and unphosphorylated form) with SMC3. Interacts with SYCP3. Interacts (phosphorylated and unphosphorylated form) with SMC1B. Does not interact with SMC1A. Interacts with RAD51. Forms a complex with EWSR1, PRDM9, SYCP3 and SYCP1; complex formation is dependent of phosphorylated form of REC8 and requires PRDM9 bound to hotspot DNA; EWSR1 joins PRDM9 with the chromosomal axis through REC8. In terms of processing, phosphorylated.

The protein resides in the nucleus. The protein localises to the chromosome. It localises to the centromere. Functionally, required during meiosis for separation of sister chromatids and homologous chromosomes. Proteolytic cleavage of REC8 on chromosome arms by separin during anaphase I allows for homologous chromosome separation in meiosis I and cleavage of REC8 on centromeres during anaphase II allows for sister chromatid separation in meiosis II. This Rattus norvegicus (Rat) protein is Meiotic recombination protein REC8 homolog.